Here is a 429-residue protein sequence, read N- to C-terminus: Malate dehydrogenase [NADP] 1, chloroplastic (429 aa).

A chloroplast-targeting transit peptide spans 1-40 (MGLSTAYSPVGSHLAPAPLGHRRSAQLHRPRRALLATVRC). A disulfide bridge links Cys64 with Cys69. 93–99 (GAAGMIS) provides a ligand contact to NADP(+). Substrate-binding residues include Arg174 and Arg180. Residues Asn187, Gln194, and 211–213 (VGN) each bind NADP(+). Substrate-binding residues include Asn213 and Arg244. His269 (proton acceptor) is an active-site residue. Cys405 and Cys417 form a disulfide bridge.

This sequence belongs to the LDH/MDH superfamily. MDH type 2 family. As to quaternary structure, homodimer.

It is found in the plastid. Its subcellular location is the chloroplast. It catalyses the reaction (S)-malate + NADP(+) = oxaloacetate + NADPH + H(+). With respect to regulation, chloroplast NADP-MDH is activated upon illumination. In order to be enzymatically active, disulfide bridges on the protein must be reduced by thioredoxin which receives electrons from ferredoxin and the electron transport system of photosynthesis. Its function is as follows. The chloroplastic, NADP-dependent form is essential for the photosynthesis C4 cycle, which allows plants to circumvent the problem of photorespiration. In C4 plants, NADP-MDH activity acts to convert oxaloacetate to malate in chloroplasts of mesophyll cells for transport to the bundle sheath cells. The protein is Malate dehydrogenase [NADP] 1, chloroplastic of Sorghum bicolor (Sorghum).